Reading from the N-terminus, the 1549-residue chain is FERM and PDZ domain-containing protein 1 (1549 aa).

The 79-residue stretch at 57-135 (TVTLDKDVLL…ALSITVVRCT (79 aa)) folds into the PDZ domain. Residues 181-496 (NVLKVYLENG…GYYRLFVDPA (316 aa)) form the FERM domain. 7 disordered regions span residues 554–618 (AREE…DDLD), 717–738 (SHLS…PPQW), 775–834 (YDAA…YAKS), 913–1046 (STNP…RSEI), 1097–1174 (SLDS…EAQE), 1231–1257 (LSPC…DDSP), and 1321–1347 (PETE…AGSQ). Positions 717–730 (SHLSDSGSESTASR) are enriched in polar residues. The interval 924-931 (EPETMETK) is important for interaction with GPSM2. Residues 950-961 (PSNTENPVTTDG) show a composition bias toward polar residues. A compositionally biased stretch (low complexity) spans 962-980 (SSASIPHSPHHSNPGSSSP). Positions 1117–1130 (SGKDLGDSKGDRLD) are enriched in basic and acidic residues.

Interacts with GPSM1. Interacts with GPSM2.

It localises to the cytoplasm. The protein localises to the cytosol. It is found in the cell membrane. Stabilizes membrane-bound GPSM1, and thereby promotes its interaction with GNAI1. This Mus musculus (Mouse) protein is FERM and PDZ domain-containing protein 1 (Frmpd1).